The sequence spans 191 residues: Flavin prenyltransferase UbiX (191 aa).

FMN-binding positions include 13–15 (GAS), threonine 39, 90–93 (TMKT), and arginine 125. Residues tyrosine 155 and lysine 171 each coordinate dimethylallyl phosphate.

This sequence belongs to the UbiX/PAD1 family.

The enzyme catalyses dimethylallyl phosphate + FMNH2 = prenylated FMNH2 + phosphate. Its function is as follows. Flavin prenyltransferase that catalyzes the synthesis of the prenylated FMN cofactor (prenyl-FMN) for 4-hydroxy-3-polyprenylbenzoic acid decarboxylase UbiD. The prenyltransferase is metal-independent and links a dimethylallyl moiety from dimethylallyl monophosphate (DMAP) to the flavin N5 and C6 atoms of FMN. This chain is Flavin prenyltransferase UbiX, found in Methanothermobacter thermautotrophicus (strain ATCC 29096 / DSM 1053 / JCM 10044 / NBRC 100330 / Delta H) (Methanobacterium thermoautotrophicum).